Reading from the N-terminus, the 333-residue chain is GTP 3',8-cyclase (333 aa).

The Radical SAM core domain occupies 7–221 (KFGRVHDYIR…FEACNEAGYE (215 aa)). Arg-16 contributes to the GTP binding site. [4Fe-4S] cluster contacts are provided by Cys-23 and Cys-27. Tyr-29 provides a ligand contact to S-adenosyl-L-methionine. [4Fe-4S] cluster is bound at residue Cys-30. Position 66 (Arg-66) interacts with GTP. Residue Gly-70 coordinates S-adenosyl-L-methionine. Residue Thr-97 participates in GTP binding. Ser-121 contributes to the S-adenosyl-L-methionine binding site. Position 158 (Lys-158) interacts with GTP. Met-192 is an S-adenosyl-L-methionine binding site. The [4Fe-4S] cluster site is built by Cys-257 and Cys-260. GTP is bound at residue 262–264 (RLR). Cys-274 contacts [4Fe-4S] cluster.

This sequence belongs to the radical SAM superfamily. MoaA family. As to quaternary structure, monomer and homodimer. [4Fe-4S] cluster serves as cofactor.

The catalysed reaction is GTP + AH2 + S-adenosyl-L-methionine = (8S)-3',8-cyclo-7,8-dihydroguanosine 5'-triphosphate + 5'-deoxyadenosine + L-methionine + A + H(+). It functions in the pathway cofactor biosynthesis; molybdopterin biosynthesis. Its function is as follows. Catalyzes the cyclization of GTP to (8S)-3',8-cyclo-7,8-dihydroguanosine 5'-triphosphate. The protein is GTP 3',8-cyclase of Listeria monocytogenes serovar 1/2a (strain ATCC BAA-679 / EGD-e).